The chain runs to 162 residues: MDFRIGQGYDVHQLVPGRPLIIGGVTIPYERGLLGHSDADVLLHAITDALFGAAALGDIGRHFSDTDPRFKGADSRALLRECAARVAQAGFSIRNVDSTIIAQAPKLAPHIDAMRANIAADLGLPLDRVNVKAKTNEKLGYLGRGEGIEAQAAALVVREAAA.

Residues D10 and H12 each contribute to the a divalent metal cation site. Residues 10–12 and 36–37 contribute to the 4-CDP-2-C-methyl-D-erythritol 2-phosphate site; these read DVH and HS. An a divalent metal cation-binding site is contributed by H44. 4-CDP-2-C-methyl-D-erythritol 2-phosphate is bound by residues 58–60, 63–67, and R144; these read DIG and FSDTD.

The protein belongs to the IspF family. In terms of assembly, homotrimer. Requires a divalent metal cation as cofactor.

It carries out the reaction 4-CDP-2-C-methyl-D-erythritol 2-phosphate = 2-C-methyl-D-erythritol 2,4-cyclic diphosphate + CMP. Its pathway is isoprenoid biosynthesis; isopentenyl diphosphate biosynthesis via DXP pathway; isopentenyl diphosphate from 1-deoxy-D-xylulose 5-phosphate: step 4/6. Functionally, involved in the biosynthesis of isopentenyl diphosphate (IPP) and dimethylallyl diphosphate (DMAPP), two major building blocks of isoprenoid compounds. Catalyzes the conversion of 4-diphosphocytidyl-2-C-methyl-D-erythritol 2-phosphate (CDP-ME2P) to 2-C-methyl-D-erythritol 2,4-cyclodiphosphate (ME-CPP) with a corresponding release of cytidine 5-monophosphate (CMP). This chain is 2-C-methyl-D-erythritol 2,4-cyclodiphosphate synthase, found in Burkholderia thailandensis (strain ATCC 700388 / DSM 13276 / CCUG 48851 / CIP 106301 / E264).